A 382-amino-acid polypeptide reads, in one-letter code: Homoserine O-succinyltransferase (382 aa).

Residues 51–359 (NAILVCHALS…EATQGHDAFL (309 aa)) form the AB hydrolase-1 domain. Ser-157 (nucleophile) is an active-site residue. Arg-227 is a binding site for substrate. Catalysis depends on residues Asp-322 and His-355. Substrate is bound at residue Asp-356.

Belongs to the AB hydrolase superfamily. MetX family. Homodimer.

It is found in the cytoplasm. It carries out the reaction L-homoserine + succinyl-CoA = O-succinyl-L-homoserine + CoA. It functions in the pathway amino-acid biosynthesis; L-methionine biosynthesis via de novo pathway; O-succinyl-L-homoserine from L-homoserine: step 1/1. Its function is as follows. Transfers a succinyl group from succinyl-CoA to L-homoserine, forming succinyl-L-homoserine. The protein is Homoserine O-succinyltransferase of Halorhodospira halophila (strain DSM 244 / SL1) (Ectothiorhodospira halophila (strain DSM 244 / SL1)).